Reading from the N-terminus, the 239-residue chain is Ribosomal RNA large subunit methyltransferase E (239 aa).

Residues G81, W83, D104, D120, and D144 each coordinate S-adenosyl-L-methionine. K184 functions as the Proton acceptor in the catalytic mechanism.

It belongs to the class I-like SAM-binding methyltransferase superfamily. RNA methyltransferase RlmE family.

Its subcellular location is the cytoplasm. The catalysed reaction is uridine(2552) in 23S rRNA + S-adenosyl-L-methionine = 2'-O-methyluridine(2552) in 23S rRNA + S-adenosyl-L-homocysteine + H(+). Specifically methylates the uridine in position 2552 of 23S rRNA at the 2'-O position of the ribose in the fully assembled 50S ribosomal subunit. The sequence is that of Ribosomal RNA large subunit methyltransferase E from Rhizobium rhizogenes (strain K84 / ATCC BAA-868) (Agrobacterium radiobacter).